A 179-amino-acid polypeptide reads, in one-letter code: tRNA-splicing endonuclease (179 aa).

Residues Tyr115, His125, and Lys156 contribute to the active site.

Belongs to the tRNA-intron endonuclease family. Archaeal short subfamily. As to quaternary structure, homotetramer; although the tetramer contains four active sites, only two participate in the cleavage. Therefore, it should be considered as a dimer of dimers.

The catalysed reaction is pretRNA = a 3'-half-tRNA molecule with a 5'-OH end + a 5'-half-tRNA molecule with a 2',3'-cyclic phosphate end + an intron with a 2',3'-cyclic phosphate and a 5'-hydroxyl terminus.. In terms of biological role, endonuclease that removes tRNA introns. Cleaves pre-tRNA at the 5'- and 3'-splice sites to release the intron. The products are an intron and two tRNA half-molecules bearing 2',3' cyclic phosphate and 5'-OH termini. Recognizes a pseudosymmetric substrate in which 2 bulged loops of 3 bases are separated by a stem of 4 bp. The polypeptide is tRNA-splicing endonuclease (endA) (Methanocaldococcus jannaschii (strain ATCC 43067 / DSM 2661 / JAL-1 / JCM 10045 / NBRC 100440) (Methanococcus jannaschii)).